Here is an 82-residue protein sequence, read N- to C-terminus: Turripeptide Gsg9.1 (82 aa).

The first 23 residues, 1–23 (MMAKLMITVMTVFFLSLQQGADG), serve as a signal peptide directing secretion. The propeptide occupies 24–46 (LFERWRKNQMAASRIMGNLITAR). 4-hydroxyproline occurs at positions 49 and 50. 3 disulfide bridges follow: Cys-53–Cys-68, Cys-58–Cys-72, and Cys-64–Cys-79. A 4-carboxyglutamate mark is found at Glu-60 and Glu-63.

Belongs to the Pg turripeptide superfamily. As to expression, expressed by the venom duct.

The protein resides in the secreted. The chain is Turripeptide Gsg9.1 from Gemmula sogodensis (Gem-turris).